The following is a 359-amino-acid chain: UPF0283 membrane protein Rleg2_1967 (359 aa).

The disordered stretch occupies residues 1–43; the sequence is MSKPPSDPPRRPPAAFTYEDEATERHDNGRQAERRRKPESFSE. Residues 23–40 are compositionally biased toward basic and acidic residues; sequence TERHDNGRQAERRRKPES. Transmembrane regions (helical) follow at residues 77–97 and 111–131; these read FGKI…GLWT and LGYL…ALVI.

Belongs to the UPF0283 family.

The protein resides in the cell inner membrane. In Rhizobium leguminosarum bv. trifolii (strain WSM2304), this protein is UPF0283 membrane protein Rleg2_1967.